We begin with the raw amino-acid sequence, 270 residues long: 3-methyl-2-oxobutanoate hydroxymethyltransferase (270 aa).

Mg(2+) contacts are provided by aspartate 53 and aspartate 92. 3-methyl-2-oxobutanoate contacts are provided by residues 53–54 (DS), aspartate 92, and lysine 120. Glutamate 122 lines the Mg(2+) pocket. The active-site Proton acceptor is glutamate 189.

It belongs to the PanB family. As to quaternary structure, homodecamer; pentamer of dimers. Mg(2+) is required as a cofactor.

The protein localises to the cytoplasm. The enzyme catalyses 3-methyl-2-oxobutanoate + (6R)-5,10-methylene-5,6,7,8-tetrahydrofolate + H2O = 2-dehydropantoate + (6S)-5,6,7,8-tetrahydrofolate. The protein operates within cofactor biosynthesis; (R)-pantothenate biosynthesis; (R)-pantoate from 3-methyl-2-oxobutanoate: step 1/2. Catalyzes the reversible reaction in which hydroxymethyl group from 5,10-methylenetetrahydrofolate is transferred onto alpha-ketoisovalerate to form ketopantoate. The sequence is that of 3-methyl-2-oxobutanoate hydroxymethyltransferase from Saccharophagus degradans (strain 2-40 / ATCC 43961 / DSM 17024).